The following is a 345-amino-acid chain: Fructose-1,6-bisphosphatase class 1 (345 aa).

Mg(2+)-binding residues include Glu90, Asp109, Leu111, and Asp112. Substrate contacts are provided by residues 112-115 (DGSS) and Asn200. Position 272 (Glu272) interacts with Mg(2+).

Belongs to the FBPase class 1 family. As to quaternary structure, homotetramer. Mg(2+) is required as a cofactor.

The protein resides in the cytoplasm. It carries out the reaction beta-D-fructose 1,6-bisphosphate + H2O = beta-D-fructose 6-phosphate + phosphate. It functions in the pathway carbohydrate biosynthesis; gluconeogenesis. The polypeptide is Fructose-1,6-bisphosphatase class 1 (Bradyrhizobium diazoefficiens (strain JCM 10833 / BCRC 13528 / IAM 13628 / NBRC 14792 / USDA 110)).